Reading from the N-terminus, the 93-residue chain is U11-ctenitoxin-Pn1a (93 aa).

An N-terminal signal peptide occupies residues 1–21 (MKCAVLFLSVIALVHIFVVEA). The propeptide occupies 22 to 34 (EEEPDSDALVPQE). Cystine bridges form between Cys-37-Cys-51, Cys-44-Cys-57, Cys-50-Cys-75, Cys-59-Cys-73, and Cys-83-Cys-90.

Belongs to the neurotoxin 09 (Tx3-6) family. In terms of tissue distribution, expressed by the venom gland.

The protein localises to the secreted. In terms of biological role, probable neurotoxin. This Phoneutria nigriventer (Brazilian armed spider) protein is U11-ctenitoxin-Pn1a.